Reading from the N-terminus, the 169-residue chain is MERAIFAGGCFWCMVQPFEELDGIVSVRSGYTGGHVPNPSYEQVCSKTTGHTEAVEIIFDPQKIDYSDLVELYWQQTDPTDAFGQFEDRGDNYRPVIFYFDERQKEIAEQSRENLQLSGRFQDPIVTQIEEAQPFYLAEDYHQAFYRKNPERYAQSSKQRHDFLEENWH.

Residue cysteine 10 is part of the active site.

This sequence belongs to the MsrA Met sulfoxide reductase family.

It carries out the reaction L-methionyl-[protein] + [thioredoxin]-disulfide + H2O = L-methionyl-(S)-S-oxide-[protein] + [thioredoxin]-dithiol. The catalysed reaction is [thioredoxin]-disulfide + L-methionine + H2O = L-methionine (S)-S-oxide + [thioredoxin]-dithiol. Functionally, has an important function as a repair enzyme for proteins that have been inactivated by oxidation. Catalyzes the reversible oxidation-reduction of methionine sulfoxide in proteins to methionine. This is Peptide methionine sulfoxide reductase MsrA from Streptococcus uberis (strain ATCC BAA-854 / 0140J).